The primary structure comprises 474 residues: Probable CAAX prenyl protease 1 (474 aa).

3 helical membrane-spanning segments follow: residues 103–123 (SWFSTIVSTFTLAVDLLIIKY), 196–216 (IFVIDLLKELSLGGLLMSVVV), and 230–250 (FIMYAWGAYIVFGLILQTIAP). Histidine 332 provides a ligand contact to Zn(2+). Residue glutamate 333 is part of the active site. Histidine 336 is a Zn(2+) binding site. The next 2 helical transmembrane spans lie at 344-364 (INTIIDYGMSLFHLFLFAAFI) and 381-401 (VIVGLLLFSDALGPLSSILTF). Glutamate 411 serves as a coordination point for Zn(2+). The active-site Proton donor is the aspartate 415.

The protein belongs to the peptidase M48A family. Zn(2+) is required as a cofactor.

It is found in the endoplasmic reticulum membrane. The enzyme catalyses Hydrolyzes the peptide bond -P2-(S-farnesyl or geranylgeranyl)C-P1'-P2'-P3'-COOH where P1' and P2' are amino acids with aliphatic side chains and P3' is any C-terminal residue.. Its function is as follows. Proteolytically removes the C-terminal three residues of farnesylated proteins. In Schizosaccharomyces pombe (strain 972 / ATCC 24843) (Fission yeast), this protein is Probable CAAX prenyl protease 1.